The sequence spans 280 residues: 4-diphosphocytidyl-2-C-methyl-D-erythritol kinase (280 aa).

Lysine 11 is an active-site residue. Residue 95-105 (PVGAGLGGGSS) coordinates ATP. Aspartate 137 is an active-site residue.

Belongs to the GHMP kinase family. IspE subfamily.

The catalysed reaction is 4-CDP-2-C-methyl-D-erythritol + ATP = 4-CDP-2-C-methyl-D-erythritol 2-phosphate + ADP + H(+). It participates in isoprenoid biosynthesis; isopentenyl diphosphate biosynthesis via DXP pathway; isopentenyl diphosphate from 1-deoxy-D-xylulose 5-phosphate: step 3/6. Functionally, catalyzes the phosphorylation of the position 2 hydroxy group of 4-diphosphocytidyl-2C-methyl-D-erythritol. This Citrifermentans bemidjiense (strain ATCC BAA-1014 / DSM 16622 / JCM 12645 / Bem) (Geobacter bemidjiensis) protein is 4-diphosphocytidyl-2-C-methyl-D-erythritol kinase.